A 341-amino-acid chain; its full sequence is L-threonine 3-dehydrogenase (341 aa).

Cys38 is a Zn(2+) binding site. Catalysis depends on charge relay system residues Thr40 and His43. Zn(2+) is bound by residues His63, Glu64, Cys93, Cys96, Cys99, and Cys107. NAD(+)-binding positions include Ile175, Asp195, Arg200, 262–264, and 286–287; these read LGI and IY.

It belongs to the zinc-containing alcohol dehydrogenase family. Homotetramer. Zn(2+) serves as cofactor.

It is found in the cytoplasm. It carries out the reaction L-threonine + NAD(+) = (2S)-2-amino-3-oxobutanoate + NADH + H(+). It functions in the pathway amino-acid degradation; L-threonine degradation via oxydo-reductase pathway; glycine from L-threonine: step 1/2. Catalyzes the NAD(+)-dependent oxidation of L-threonine to 2-amino-3-ketobutyrate. The chain is L-threonine 3-dehydrogenase from Shewanella sp. (strain W3-18-1).